Here is a 312-residue protein sequence, read N- to C-terminus: Protoheme IX farnesyltransferase (312 aa).

Transmembrane regions (helical) follow at residues 34 to 54, 56 to 76, 119 to 139, 152 to 172, 179 to 199, 225 to 245, 248 to 268, and 283 to 303; these read LVIF…HPVL, ITSL…NMAL, ILVN…YVVI, IVIG…AATG, LLLF…LALF, ILLY…LGYF, VYGV…IEVF, and LFAF…LEAV.

The protein belongs to the UbiA prenyltransferase family. Protoheme IX farnesyltransferase subfamily.

Its subcellular location is the cell inner membrane. The enzyme catalyses heme b + (2E,6E)-farnesyl diphosphate + H2O = Fe(II)-heme o + diphosphate. It functions in the pathway porphyrin-containing compound metabolism; heme O biosynthesis; heme O from protoheme: step 1/1. Its function is as follows. Converts heme B (protoheme IX) to heme O by substitution of the vinyl group on carbon 2 of heme B porphyrin ring with a hydroxyethyl farnesyl side group. The chain is Protoheme IX farnesyltransferase from Bradyrhizobium sp. (strain BTAi1 / ATCC BAA-1182).